The following is a 323-amino-acid chain: Mycothiol acetyltransferase (323 aa).

Glutamate 44 contributes to the 1D-myo-inositol 2-(L-cysteinylamino)-2-deoxy-alpha-D-glucopyranoside binding site. Position 98–100 (98–100) interacts with acetyl-CoA; it reads LAV. Residues 173–323 form the N-acetyltransferase domain; sequence VSLRAFIPGQ…DVMYGPKNGG (151 aa). 1D-myo-inositol 2-(L-cysteinylamino)-2-deoxy-alpha-D-glucopyranoside contacts are provided by glutamate 200, lysine 240, and glutamate 253. Acetyl-CoA-binding positions include 257-259 and 264-270; these read VGV and QGMGLGK. Tyrosine 291 contributes to the 1D-myo-inositol 2-(L-cysteinylamino)-2-deoxy-alpha-D-glucopyranoside binding site.

The protein belongs to the acetyltransferase family. MshD subfamily. In terms of assembly, monomer.

The enzyme catalyses 1D-myo-inositol 2-(L-cysteinylamino)-2-deoxy-alpha-D-glucopyranoside + acetyl-CoA = mycothiol + CoA + H(+). Its function is as follows. Catalyzes the transfer of acetyl from acetyl-CoA to desacetylmycothiol (Cys-GlcN-Ins) to form mycothiol. The protein is Mycothiol acetyltransferase of Arthrobacter sp. (strain FB24).